Consider the following 469-residue polypeptide: Neuraminidase (469 aa).

Residues 1–9 are Intravirion-facing; it reads MNPNQKIIT. Residues 10-30 traverse the membrane as a helical segment; sequence IGSVSLTIATICFLMQIAILV. An involved in apical transport and lipid raft association region spans residues 11–33; the sequence is GSVSLTIATICFLMQIAILVTTV. Over 31-469 the chain is Virion surface; that stretch reads TTVTLHFKQY…DGADINLMPI (439 aa). The segment at 36-88 is hypervariable stalk region; the sequence is HFKQYECDSPANNQVMPCEPIIIERNITEIVYLTNTTIEKEICPKLVEYRNWS. Residues N61, N70, and N86 are each glycosylated (N-linked (GlcNAc...) asparagine; by host). The tract at residues 91–469 is head of neuraminidase; the sequence is QCKITGFAPF…DGADINLMPI (379 aa). 8 cysteine pairs are disulfide-bonded: C92–C417, C124–C129, C183–C230, C232–C237, C278–C291, C280–C289, C318–C337, and C421–C447. R118 contributes to the substrate binding site. N-linked (GlcNAc...) asparagine; by host glycosylation occurs at N146. The Proton donor/acceptor role is filled by D151. A substrate-binding site is contributed by R152. 2 N-linked (GlcNAc...) asparagine; by host glycosylation sites follow: N200 and N234. Substrate is bound at residue 276–277; sequence EE. R292 lines the substrate pocket. The Ca(2+) site is built by D293, G297, and D324. Residue R371 coordinates substrate. N402 is a glycosylation site (N-linked (GlcNAc...) asparagine; by host). Y406 functions as the Nucleophile in the catalytic mechanism.

It belongs to the glycosyl hydrolase 34 family. As to quaternary structure, homotetramer. Requires Ca(2+) as cofactor. Post-translationally, N-glycosylated.

It is found in the virion membrane. It localises to the host apical cell membrane. The enzyme catalyses Hydrolysis of alpha-(2-&gt;3)-, alpha-(2-&gt;6)-, alpha-(2-&gt;8)- glycosidic linkages of terminal sialic acid residues in oligosaccharides, glycoproteins, glycolipids, colominic acid and synthetic substrates.. Its activity is regulated as follows. Inhibited by the neuraminidase inhibitors zanamivir (Relenza) and oseltamivir (Tamiflu). These drugs interfere with the release of progeny virus from infected cells and are effective against all influenza strains. Resistance to neuraminidase inhibitors is quite rare. In terms of biological role, catalyzes the removal of terminal sialic acid residues from viral and cellular glycoconjugates. Cleaves off the terminal sialic acids on the glycosylated HA during virus budding to facilitate virus release. Additionally helps virus spread through the circulation by further removing sialic acids from the cell surface. These cleavages prevent self-aggregation and ensure the efficient spread of the progeny virus from cell to cell. Otherwise, infection would be limited to one round of replication. Described as a receptor-destroying enzyme because it cleaves a terminal sialic acid from the cellular receptors. May facilitate viral invasion of the upper airways by cleaving the sialic acid moieties on the mucin of the airway epithelial cells. Likely to plays a role in the budding process through its association with lipid rafts during intracellular transport. May additionally display a raft-association independent effect on budding. Plays a role in the determination of host range restriction on replication and virulence. Sialidase activity in late endosome/lysosome traffic seems to enhance virus replication. The sequence is that of Neuraminidase from Aves (whales).